The chain runs to 207 residues: ATP-dependent Clp protease proteolytic subunit 1 (207 aa).

The Nucleophile role is filled by serine 103. Histidine 128 is an active-site residue.

Belongs to the peptidase S14 family. As to quaternary structure, fourteen ClpP subunits assemble into 2 heptameric rings which stack back to back to give a disk-like structure with a central cavity, resembling the structure of eukaryotic proteasomes.

It localises to the cytoplasm. The catalysed reaction is Hydrolysis of proteins to small peptides in the presence of ATP and magnesium. alpha-casein is the usual test substrate. In the absence of ATP, only oligopeptides shorter than five residues are hydrolyzed (such as succinyl-Leu-Tyr-|-NHMec, and Leu-Tyr-Leu-|-Tyr-Trp, in which cleavage of the -Tyr-|-Leu- and -Tyr-|-Trp bonds also occurs).. In terms of biological role, cleaves peptides in various proteins in a process that requires ATP hydrolysis. Has a chymotrypsin-like activity. Plays a major role in the degradation of misfolded proteins. The sequence is that of ATP-dependent Clp protease proteolytic subunit 1 from Tropheryma whipplei (strain Twist) (Whipple's bacillus).